A 242-amino-acid polypeptide reads, in one-letter code: Vacuole localized DSC protein 1 (242 aa).

2 helical membrane-spanning segments follow: residues 128-148 (PYGF…PTAF) and 152-172 (LLLV…INGS).

As to quaternary structure, part of the vacuole-localized DSC E3 ligase complex composed of at least TUL1, DSC2, DSC3, UBX3, CDC48 and VLD1.

The protein localises to the vacuole membrane. Functionally, component of the vacuole-localized DSC E3 ubiquitin ligase complex involved in the targeting of the complex to the vacuole membrane via the AP3 pathway to ubiquinate vacuolar membrane proteins. Competes with GLD1 to determine the subcellular localizations of the DSC complex. The sequence is that of Vacuole localized DSC protein 1 from Saccharomyces cerevisiae (strain ATCC 204508 / S288c) (Baker's yeast).